The primary structure comprises 149 residues: Calmodulin-1 (149 aa).

N-acetylalanine is present on A2. 4 EF-hand domains span residues 8–43 (EQIA…LGQN), 44–79 (PTEA…KMKD), 81–116 (DSEE…LGEK), and 117–149 (LTDE…MLAK). 14 residues coordinate Ca(2+): D21, D23, D25, C27, E32, D57, D59, N61, T63, E68, D94, D96, N98, and E105. Position 116 is an N6,N6,N6-trimethyllysine (K116). Residues D130, D132, D134, Q136, and E141 each coordinate Ca(2+).

It belongs to the calmodulin family. High expression in stolon tips and stems, moderate in roots, and very low in leaves. Localized in the meristematic regions of the shoot and root tips, the tip of the developing tuber and the vascular zones of petiole and tuber. Not detected in mesophyll cells.

Calmodulin mediates the control of a large number of enzymes, ion channels and other proteins by Ca(2+). Among the enzymes to be stimulated by the calmodulin-Ca(2+) complex are a number of protein kinases and phosphatases. This is Calmodulin-1 (PCM1) from Solanum tuberosum (Potato).